The chain runs to 100 residues: Urease subunit gamma (100 aa).

Belongs to the urease gamma subunit family. Heterotrimer of UreA (gamma), UreB (beta) and UreC (alpha) subunits. Three heterotrimers associate to form the active enzyme.

Its subcellular location is the cytoplasm. It catalyses the reaction urea + 2 H2O + H(+) = hydrogencarbonate + 2 NH4(+). The protein operates within nitrogen metabolism; urea degradation; CO(2) and NH(3) from urea (urease route): step 1/1. The polypeptide is Urease subunit gamma (Acinetobacter baumannii (strain SDF)).